We begin with the raw amino-acid sequence, 108 residues long: Protein RnfH (108 aa).

This sequence belongs to the UPF0125 (RnfH) family.

The protein is Protein RnfH of Laribacter hongkongensis (strain HLHK9).